The sequence spans 109 residues: uncharacterized protein (109 aa).

Residues 75–95 (LHFFFLFWLLNFILFFRIHLY) traverse the membrane as a helical segment.

Its subcellular location is the membrane. This is an uncharacterized protein from Schizosaccharomyces pombe (strain 972 / ATCC 24843) (Fission yeast).